Consider the following 183-residue polypeptide: Small ribosomal subunit protein bS20c (183 aa).

The transit peptide at 1-68 (MAAISMACVS…FQRRGFSVVC (68 aa)) directs the protein to the chloroplast. Residues 79–99 (AAKRTRQAETRRLRNKARKSE) form a disordered region.

As to quaternary structure, component of the chloroplast small ribosomal subunit (SSU). Mature 70S chloroplast ribosomes of higher plants consist of a small (30S) and a large (50S) subunit. The 30S small subunit contains 1 molecule of ribosomal RNA (16S rRNA) and 24 different proteins. The 50S large subunit contains 3 rRNA molecules (23S, 5S and 4.5S rRNA) and 33 different proteins.

It localises to the plastid. It is found in the chloroplast. Its function is as follows. Component of the chloroplast ribosome (chloro-ribosome), a dedicated translation machinery responsible for the synthesis of chloroplast genome-encoded proteins, including proteins of the transcription and translation machinery and components of the photosynthetic apparatus. The sequence is that of Small ribosomal subunit protein bS20c (RPS20) from Spinacia oleracea (Spinach).